The chain runs to 287 residues: ATP synthase gamma chain (287 aa).

It belongs to the ATPase gamma chain family. As to quaternary structure, F-type ATPases have 2 components, CF(1) - the catalytic core - and CF(0) - the membrane proton channel. CF(1) has five subunits: alpha(3), beta(3), gamma(1), delta(1), epsilon(1). CF(0) has three main subunits: a, b and c.

The protein localises to the cell inner membrane. In terms of biological role, produces ATP from ADP in the presence of a proton gradient across the membrane. The gamma chain is believed to be important in regulating ATPase activity and the flow of protons through the CF(0) complex. This chain is ATP synthase gamma chain, found in Stenotrophomonas maltophilia (strain K279a).